We begin with the raw amino-acid sequence, 1402 residues long: Baculoviral IAP repeat-containing protein 1g (1402 aa).

3 BIR repeats span residues 60 to 127 (EAKR…CEFL), 159 to 227 (EEAR…CEFL), and 278 to 345 (EELR…CVFL). Residues C315, C318, H335, and C342 each coordinate Zn(2+). Residues 464–759 (SVMCVEGEAG…EFLAAVRLTE (296 aa)) form the NACHT domain. K476 provides a ligand contact to ATP.

In terms of biological role, prevents motor-neuron apoptosis induced by a variety of signals. The chain is Baculoviral IAP repeat-containing protein 1g (Naip7) from Mus musculus (Mouse).